A 246-amino-acid polypeptide reads, in one-letter code: 4-hydroxy-tetrahydrodipicolinate reductase (246 aa).

Residues 7-12 (GATGRT), 84-86 (GTT), and 108-111 (ASNF) contribute to the NAD(+) site. The active-site Proton donor/acceptor is the His-140. Residue His-141 coordinates (S)-2,3,4,5-tetrahydrodipicolinate. The active-site Proton donor is the Lys-144. 150–151 (GT) is a binding site for (S)-2,3,4,5-tetrahydrodipicolinate.

This sequence belongs to the DapB family.

The protein localises to the cytoplasm. The catalysed reaction is (S)-2,3,4,5-tetrahydrodipicolinate + NAD(+) + H2O = (2S,4S)-4-hydroxy-2,3,4,5-tetrahydrodipicolinate + NADH + H(+). The enzyme catalyses (S)-2,3,4,5-tetrahydrodipicolinate + NADP(+) + H2O = (2S,4S)-4-hydroxy-2,3,4,5-tetrahydrodipicolinate + NADPH + H(+). Its pathway is amino-acid biosynthesis; L-lysine biosynthesis via DAP pathway; (S)-tetrahydrodipicolinate from L-aspartate: step 4/4. In terms of biological role, catalyzes the conversion of 4-hydroxy-tetrahydrodipicolinate (HTPA) to tetrahydrodipicolinate. The sequence is that of 4-hydroxy-tetrahydrodipicolinate reductase from Natronomonas pharaonis (strain ATCC 35678 / DSM 2160 / CIP 103997 / JCM 8858 / NBRC 14720 / NCIMB 2260 / Gabara) (Halobacterium pharaonis).